The following is a 324-amino-acid chain: Putative S-adenosyl-L-methionine-dependent methyltransferase MMAR_1059 (324 aa).

S-adenosyl-L-methionine is bound by residues D138 and 167 to 168 (DL).

The protein belongs to the UPF0677 family.

In terms of biological role, exhibits S-adenosyl-L-methionine-dependent methyltransferase activity. In Mycobacterium marinum (strain ATCC BAA-535 / M), this protein is Putative S-adenosyl-L-methionine-dependent methyltransferase MMAR_1059.